We begin with the raw amino-acid sequence, 176 residues long: Protein CURLY FLAG LEAF 2 (176 aa).

An EAR motif is present at residues 41 to 46 (FLELSS). In terms of domain architecture, WW spans 48–82 (FSVPSHLEQCLDLKTGEIYYRSWNSGMRVKEDPRK). 2 disordered regions span residues 77–106 (KEDP…SSEE) and 111–130 (YESE…YHKE). The span at 93-106 (SSGESSGTVFSSEE) shows a compositional bias: low complexity.

In terms of assembly, may interact with BHLH122/CFLAP1 and BHLH80/CFLAP2.

Its function is as follows. May negatively regulate the cuticle development by interacting with the HD-ZIP IV transcription factor HDG1. The chain is Protein CURLY FLAG LEAF 2 from Arabidopsis thaliana (Mouse-ear cress).